The sequence spans 249 residues: uncharacterized protein (249 aa).

This is an uncharacterized protein from Escherichia coli O6:H1 (strain CFT073 / ATCC 700928 / UPEC).